We begin with the raw amino-acid sequence, 378 residues long: Dihydroorotate dehydrogenase (quinone) (378 aa).

FMN-binding positions include Pro79–Lys83 and Thr103. Lys83 provides a ligand contact to substrate. Residue Asn128 to Phe132 participates in substrate binding. FMN-binding residues include Asn160 and Asn193. Asn193 contacts substrate. Residue Ser196 is the Nucleophile of the active site. Asn198 is a substrate binding site. FMN is bound by residues Lys231 and Thr259. Residue Asn260–Thr261 participates in substrate binding. FMN contacts are provided by residues Gly289, Gly318, and Tyr339–Thr340.

The protein belongs to the dihydroorotate dehydrogenase family. Type 2 subfamily. As to quaternary structure, monomer. FMN is required as a cofactor.

It is found in the cell membrane. The catalysed reaction is (S)-dihydroorotate + a quinone = orotate + a quinol. Its pathway is pyrimidine metabolism; UMP biosynthesis via de novo pathway; orotate from (S)-dihydroorotate (quinone route): step 1/1. Functionally, catalyzes the conversion of dihydroorotate to orotate with quinone as electron acceptor. The sequence is that of Dihydroorotate dehydrogenase (quinone) from Trichodesmium erythraeum (strain IMS101).